The chain runs to 230 residues: uncharacterized protein (230 aa).

Over residues 1 to 11 (MPVPSVTVTTD) the composition is skewed to polar residues. Positions 1–88 (MPVPSVTVTT…TLKRPTSNSI (88 aa)) are disordered. The span at 63–73 (DDQHRHSDVHS) shows a compositional bias: basic and acidic residues. Residues 79–88 (TLKRPTSNSI) show a composition bias toward polar residues. Ser-106 is modified (phosphoserine). Positions 156–179 (LKREDSRVSSTKKEHINDHTDMHS) are enriched in basic and acidic residues. The interval 156–203 (LKREDSRVSSTKKEHINDHTDMHSTRSKVTTNSQGSSLEPNKLNMAVE) is disordered. A compositionally biased stretch (polar residues) spans 182-194 (SKVTTNSQGSSLE).

This is an uncharacterized protein from Saccharomyces cerevisiae (strain ATCC 204508 / S288c) (Baker's yeast).